Here is a 320-residue protein sequence, read N- to C-terminus: tRNA(Ile)-lysidine synthase, chloroplastic (320 aa).

31–36 contacts ATP; it reads SGGKDS.

This sequence belongs to the tRNA(Ile)-lysidine synthase family.

It localises to the plastid. The protein resides in the chloroplast. It catalyses the reaction cytidine(34) in tRNA(Ile2) + L-lysine + ATP = lysidine(34) in tRNA(Ile2) + AMP + diphosphate + H(+). In terms of biological role, ligates lysine onto the cytidine present at position 34 of the AUA codon-specific tRNA(Ile) that contains the anticodon CAU, in an ATP-dependent manner. Cytidine is converted to lysidine, thus changing the amino acid specificity of the tRNA from methionine to isoleucine. The polypeptide is tRNA(Ile)-lysidine synthase, chloroplastic (Gracilaria tenuistipitata var. liui (Red alga)).